The sequence spans 147 residues: Protein KilB (147 aa).

The interval 1–20 is hydrophobic; the sequence is MVTTLIAVIGTLAGTGLAGL.

In terms of biological role, involved in plasmid transfer. This is Protein KilB (kilB) from Streptomyces lividans.